The chain runs to 292 residues: tRNA(Ile)-lysidine synthase (292 aa).

Residue 32-37 (SGGADS) participates in ATP binding.

It belongs to the tRNA(Ile)-lysidine synthase family.

The protein resides in the cytoplasm. The enzyme catalyses cytidine(34) in tRNA(Ile2) + L-lysine + ATP = lysidine(34) in tRNA(Ile2) + AMP + diphosphate + H(+). Its function is as follows. Ligates lysine onto the cytidine present at position 34 of the AUA codon-specific tRNA(Ile) that contains the anticodon CAU, in an ATP-dependent manner. Cytidine is converted to lysidine, thus changing the amino acid specificity of the tRNA from methionine to isoleucine. The protein is tRNA(Ile)-lysidine synthase of Corynebacterium diphtheriae (strain ATCC 700971 / NCTC 13129 / Biotype gravis).